We begin with the raw amino-acid sequence, 158 residues long: SsrA-binding protein (158 aa).

The protein belongs to the SmpB family.

It localises to the cytoplasm. Required for rescue of stalled ribosomes mediated by trans-translation. Binds to transfer-messenger RNA (tmRNA), required for stable association of tmRNA with ribosomes. tmRNA and SmpB together mimic tRNA shape, replacing the anticodon stem-loop with SmpB. tmRNA is encoded by the ssrA gene; the 2 termini fold to resemble tRNA(Ala) and it encodes a 'tag peptide', a short internal open reading frame. During trans-translation Ala-aminoacylated tmRNA acts like a tRNA, entering the A-site of stalled ribosomes, displacing the stalled mRNA. The ribosome then switches to translate the ORF on the tmRNA; the nascent peptide is terminated with the 'tag peptide' encoded by the tmRNA and targeted for degradation. The ribosome is freed to recommence translation, which seems to be the essential function of trans-translation. The sequence is that of SsrA-binding protein from Buchnera aphidicola subsp. Baizongia pistaciae (strain Bp).